The following is a 267-amino-acid chain: Cilia- and flagella-associated protein 300 (267 aa).

It belongs to the CFAP300 family. Interacts with DNAAF2.

Its subcellular location is the cytoplasm. It is found in the cytoskeleton. The protein resides in the cilium axoneme. Cilium- and flagellum-specific protein that plays a role in axonemal structure organization and motility. May play a role in outer and inner dynein arm assembly. In Rattus norvegicus (Rat), this protein is Cilia- and flagella-associated protein 300.